A 308-amino-acid polypeptide reads, in one-letter code: ATP synthase gamma chain (308 aa).

This sequence belongs to the ATPase gamma chain family. In terms of assembly, F-type ATPases have 2 components, CF(1) - the catalytic core - and CF(0) - the membrane proton channel. CF(1) has five subunits: alpha(3), beta(3), gamma(1), delta(1), epsilon(1). CF(0) has three main subunits: a, b and c.

The protein resides in the cell inner membrane. Produces ATP from ADP in the presence of a proton gradient across the membrane. The gamma chain is believed to be important in regulating ATPase activity and the flow of protons through the CF(0) complex. In Bartonella tribocorum (strain CIP 105476 / IBS 506), this protein is ATP synthase gamma chain.